Here is a 231-residue protein sequence, read N- to C-terminus: Ribosomal RNA large subunit methyltransferase E (231 aa).

S-adenosyl-L-methionine-binding residues include Gly-76, Trp-78, Asp-99, Asp-115, and Asp-139. Lys-179 functions as the Proton acceptor in the catalytic mechanism.

Belongs to the class I-like SAM-binding methyltransferase superfamily. RNA methyltransferase RlmE family.

Its subcellular location is the cytoplasm. It catalyses the reaction uridine(2552) in 23S rRNA + S-adenosyl-L-methionine = 2'-O-methyluridine(2552) in 23S rRNA + S-adenosyl-L-homocysteine + H(+). Its function is as follows. Specifically methylates the uridine in position 2552 of 23S rRNA at the 2'-O position of the ribose in the fully assembled 50S ribosomal subunit. The sequence is that of Ribosomal RNA large subunit methyltransferase E from Bradyrhizobium sp. (strain BTAi1 / ATCC BAA-1182).